The chain runs to 384 residues: Thylakoid membrane protein TERC, chloroplastic (384 aa).

Residues 1-48 (MSLASVIHHGILPPAKSDRIFLTIPVFPPDFRARGWTKSPFSLLINPS) constitute a chloroplast transit peptide. The Stromal segment spans residues 49–115 (LASAANRRLS…DYQQEETYKT (67 aa)). The tract at residues 68–104 (GIDQEDEEKESRELLPHKNDENATTSRSSSSVDSGGL) is disordered. Over residues 76-88 (KESRELLPHKNDE) the composition is skewed to basic and acidic residues. Residues 116-136 (SFKTVALCVGTAVAFGIGIGL) form a helical membrane-spanning segment. The Lumenal, thylakoid segment spans residues 137-145 (KEGVGKASE). Residues 146-166 (FFAGYILEQSLSVDNLFVFVL) form a helical membrane-spanning segment. At 167 to 180 (VFKYFKVPLMYQNK) the chain is on the stromal side. The chain crosses the membrane as a helical span at residues 181–201 (VLTYGIAGAIVFRFTLILLGT). The Lumenal, thylakoid portion of the chain corresponds to 202-206 (ATLQK). A helical membrane pass occupies residues 207–227 (FEAVNLLLAAVLLYSSFKLFA). Residues 228 to 275 (SEEDDTDLSDNFIVKTCQRFIPVTSSYDGNRFFTKHDGILKATPLLLT) lie on the Stromal side of the membrane. The chain crosses the membrane as a helical span at residues 276–296 (VAVIELSDIAFAVDSIPAVFG). Over 297–301 (VTRDP) the chain is Lumenal, thylakoid. A helical membrane pass occupies residues 302-322 (FIVLTSNLFAILGLRSLYTLI). The Stromal portion of the chain corresponds to 323–335 (SEGMDELEYLQPS). The helical transmembrane segment at 336-356 (IAVVLGFIGVKMILDFFGFHI) threads the bilayer. A topological domain (lumenal, thylakoid) is located at residue serine 357. The helical transmembrane segment at 358 to 378 (TEASLGVVALSLSTGVLLSLT) threads the bilayer. At 379-384 (NKSSDS) the chain is on the stromal side.

In terms of assembly, interacts with ALB3. Expressed in roots, rosette and cauline leaves, stems and flowers.

It is found in the plastid. The protein resides in the chloroplast thylakoid membrane. Integral thylakoid membrane protein that plays a crucial role in thylakoid membrane biogenesis and thylakoid formation in early chloroplast development. Is essential for de novo synthesis of photosystem II (PSII) core proteins and required for efficient insertion of thylakoid membrane proteins, presumably via interaction with ALB3. May assist synthesis of thylakoid membrane proteins at the membrane insertion step. The protein is Thylakoid membrane protein TERC, chloroplastic of Arabidopsis thaliana (Mouse-ear cress).